Consider the following 386-residue polypeptide: Benzoyl-CoA reductase subunit C (386 aa).

It belongs to the FldB/FldC dehydratase alpha/beta subunit family. In terms of assembly, heterotetramer composed of A, B, C, and D subunits. Iron-sulfur cluster is required as a cofactor. It depends on an oxidized flavin as a cofactor.

It catalyses the reaction cyclohexa-1,5-diene-1-carbonyl-CoA + oxidized 2[4Fe-4S]-[ferredoxin] + 2 ADP + 2 phosphate = reduced 2[4Fe-4S]-[ferredoxin] + benzoyl-CoA + 2 ATP + 2 H2O. The catalysed reaction is 3-hydroxybenzoyl-CoA + AH2 + 2 ATP + 2 H2O = 3-hydroxycyclohexa-1,5-diene-1-carbonyl-CoA + A + 2 ADP + 2 phosphate + 2 H(+). Its function is as follows. Catalyzes the anaerobic reduction of benzoyl-CoA and 3-hydroxybenzoyl-CoA to form cyclohexa-1,5-diene-1-carbonyl-CoA and 3-hydroxycyclohexa-1,5-diene-1-carbonyl-CoA, respectively. The enzyme also reduces other benzoyl-CoA analogs with small substituents at the aromatic ring. The polypeptide is Benzoyl-CoA reductase subunit C (bcrC) (Thauera aromatica).